We begin with the raw amino-acid sequence, 209 residues long: Glycerol-3-phosphate acyltransferase (209 aa).

Transmembrane regions (helical) follow at residues 4-24, 53-75, 80-102, 112-132, and 138-158; these read IAIG…AILI, LAAA…IGYG, PFWL…FFHF, LGAI…TWLL, and GYSS…VWWF.

This sequence belongs to the PlsY family. As to quaternary structure, probably interacts with PlsX.

It localises to the cell inner membrane. The enzyme catalyses an acyl phosphate + sn-glycerol 3-phosphate = a 1-acyl-sn-glycero-3-phosphate + phosphate. It participates in lipid metabolism; phospholipid metabolism. In terms of biological role, catalyzes the transfer of an acyl group from acyl-phosphate (acyl-PO(4)) to glycerol-3-phosphate (G3P) to form lysophosphatidic acid (LPA). This enzyme utilizes acyl-phosphate as fatty acyl donor, but not acyl-CoA or acyl-ACP. This is Glycerol-3-phosphate acyltransferase from Sodalis glossinidius (strain morsitans).